The primary structure comprises 91 residues: MSNTDSVRVKLLFFAKSRELAGVSGTDDFLVPHAEIKCSELLDLICNRYNLSIIRNNVILAHNEQYCADLSETIRIRNGDELAVIPPISGG.

1-thioglycine; alternate is present on Gly91. Position 91 is a glycyl adenylate; alternate (Gly91).

It belongs to the MoaD family. MOCS2A subfamily. As to quaternary structure, heterotetramer; composed of 2 small (MOCS2A) and 2 large (MOCS2B) subunits. Post-translationally, C-terminal thiocarboxylation occurs in 2 steps, it is first acyl-adenylated (-COAMP) via the hesA/moeB/thiF part of MOCS3, then thiocarboxylated (-COSH) via the rhodanese domain of MOCS3.

It localises to the cytoplasm. It functions in the pathway cofactor biosynthesis; molybdopterin biosynthesis. In terms of biological role, acts as a sulfur carrier required for molybdopterin biosynthesis. Component of the molybdopterin synthase complex that catalyzes the conversion of precursor Z into molybdopterin by mediating the incorporation of 2 sulfur atoms into precursor Z to generate a dithiolene group. In the complex, serves as sulfur donor by being thiocarboxylated (-COSH) at its C-terminus by MOCS3. After interaction with MOCS2B, the sulfur is then transferred to precursor Z to form molybdopterin. The protein is Molybdopterin synthase sulfur carrier subunit of Anopheles gambiae (African malaria mosquito).